A 228-amino-acid chain; its full sequence is Ureidoacrylate amidohydrolase RutB (228 aa).

The active-site Proton acceptor is aspartate 23. Residue lysine 132 is part of the active site. Cysteine 165 serves as the catalytic Nucleophile.

Belongs to the isochorismatase family. RutB subfamily.

The enzyme catalyses (Z)-3-ureidoacrylate + H2O + H(+) = (Z)-3-aminoacrylate + NH4(+) + CO2. The catalysed reaction is (Z)-3-ureidoacrylate + H2O = (Z)-3-aminoacrylate + carbamate + H(+). It catalyses the reaction (Z)-2-methylureidoacrylate + H2O + H(+) = (Z)-2-methylaminoacrylate + NH4(+) + CO2. Hydrolyzes ureidoacrylate to form aminoacrylate and carbamate. The carbamate hydrolyzes spontaneously, thereby releasing one of the nitrogen atoms of the pyrimidine ring as ammonia and one of its carbon atoms as CO2. In Agrobacterium fabrum (strain C58 / ATCC 33970) (Agrobacterium tumefaciens (strain C58)), this protein is Ureidoacrylate amidohydrolase RutB.